Here is a 398-residue protein sequence, read N- to C-terminus: uncharacterized protein (398 aa).

The signal sequence occupies residues 1–21 (MRKVGITLSVVALVIMGFVAG). Residue C22 is modified to N-acetylcysteine. The S-archaeol cysteine moiety is linked to residue C22.

Belongs to the BMP lipoprotein family.

Its subcellular location is the cell membrane. This is an uncharacterized protein from Pyrococcus furiosus (strain ATCC 43587 / DSM 3638 / JCM 8422 / Vc1).